Here is a 443-residue protein sequence, read N- to C-terminus: ATP-dependent protease ATPase subunit HslU (443 aa).

ATP-binding positions include I18, 60–65 (GVGKTE), D256, E321, and R393.

The protein belongs to the ClpX chaperone family. HslU subfamily. A double ring-shaped homohexamer of HslV is capped on each side by a ring-shaped HslU homohexamer. The assembly of the HslU/HslV complex is dependent on binding of ATP.

It localises to the cytoplasm. Functionally, ATPase subunit of a proteasome-like degradation complex; this subunit has chaperone activity. The binding of ATP and its subsequent hydrolysis by HslU are essential for unfolding of protein substrates subsequently hydrolyzed by HslV. HslU recognizes the N-terminal part of its protein substrates and unfolds these before they are guided to HslV for hydrolysis. The protein is ATP-dependent protease ATPase subunit HslU of Citrobacter koseri (strain ATCC BAA-895 / CDC 4225-83 / SGSC4696).